The chain runs to 215 residues: 3-demethoxyubiquinol 3-hydroxylase (215 aa).

6 residues coordinate Fe cation: E64, E94, H97, E146, E178, and H181.

The protein belongs to the COQ7 family. Fe cation is required as a cofactor.

Its subcellular location is the cell membrane. It carries out the reaction a 5-methoxy-2-methyl-3-(all-trans-polyprenyl)benzene-1,4-diol + AH2 + O2 = a 3-demethylubiquinol + A + H2O. Its pathway is cofactor biosynthesis; ubiquinone biosynthesis. Functionally, catalyzes the hydroxylation of 2-nonaprenyl-3-methyl-6-methoxy-1,4-benzoquinol during ubiquinone biosynthesis. The polypeptide is 3-demethoxyubiquinol 3-hydroxylase (Pseudomonas paraeruginosa (strain DSM 24068 / PA7) (Pseudomonas aeruginosa (strain PA7))).